The following is a 119-amino-acid chain: Large ribosomal subunit protein bL20 (119 aa).

This sequence belongs to the bacterial ribosomal protein bL20 family.

Functionally, binds directly to 23S ribosomal RNA and is necessary for the in vitro assembly process of the 50S ribosomal subunit. It is not involved in the protein synthesizing functions of that subunit. The protein is Large ribosomal subunit protein bL20 of Jannaschia sp. (strain CCS1).